A 249-amino-acid polypeptide reads, in one-letter code: Anamorsin homolog (249 aa).

The segment at 1 to 130 (MEQFKDLQKS…ETGSAARLSF (130 aa)) is N-terminal SAM-like domain. Residues 131–161 (AKKAAGVNVWKISGDDEELIDEEDLLDEADK) are linker. [2Fe-2S] cluster contacts are provided by C172, C181, C184, and C186. The tract at residues 172 to 186 (CSTTGKRKACKNCSC) is fe-S binding site A. [4Fe-4S] cluster is bound by residues C210, C213, C221, and C224. 2 consecutive short sequence motifs (cx2C motif) follow at residues 210-213 (CGNC) and 221-224 (CSTC). The fe-S binding site B stretch occupies residues 210 to 224 (CGNCYLGDAFRCSTC).

Belongs to the anamorsin family. Monomer. The cofactor is [2Fe-2S] cluster. [4Fe-4S] cluster serves as cofactor.

It localises to the cytoplasm. The protein localises to the mitochondrion intermembrane space. In terms of biological role, component of the cytosolic iron-sulfur (Fe-S) protein assembly (CIA) machinery. Required for the maturation of extramitochondrial Fe-S proteins. Part of an electron transfer chain functioning in an early step of cytosolic Fe-S biogenesis, facilitating the de novo assembly of a [4Fe-4S] cluster on the cytosolic Fe-S scaffold complex. Electrons are transferred from NADPH via a FAD- and FMN-containing diflavin oxidoreductase. Together with the diflavin oxidoreductase, also required for the assembly of the diferric tyrosyl radical cofactor of ribonucleotide reductase (RNR), probably by providing electrons for reduction during radical cofactor maturation in the catalytic small subunit. This is Anamorsin homolog from Drosophila grimshawi (Hawaiian fruit fly).